The chain runs to 102 residues: Small ribosomal subunit protein uS10 (102 aa).

This sequence belongs to the universal ribosomal protein uS10 family. In terms of assembly, part of the 30S ribosomal subunit.

Involved in the binding of tRNA to the ribosomes. The protein is Small ribosomal subunit protein uS10 of Thermotoga maritima (strain ATCC 43589 / DSM 3109 / JCM 10099 / NBRC 100826 / MSB8).